Consider the following 195-residue polypeptide: CASP-like protein 1B1 (195 aa).

The Cytoplasmic segment spans residues 1-22; sequence MGLQNEEKLELGCTGLQPKPKK. The chain crosses the membrane as a helical span at residues 23–43; it reads WVLLMVRVVAFLATAAATLVM. The Extracellular segment spans residues 44–75; it reads ALNKETKTLVVATVGNTPIKVTLTAKFQHTPA. The chain crosses the membrane as a helical span at residues 76-96; it reads FVFFVIANGMASFHNLLMIMV. At 97-109 the chain is on the cytoplasmic side; it reads ELCGQKLDYKGMR. A helical transmembrane segment spans residues 110 to 130; sequence LAMVAILDMMTVALVSGGASA. Residues 131–163 are Extracellular-facing; it reads ATFMAELGKNGNSHARWDKICDKFETFCDHGGA. A helical transmembrane segment spans residues 164–184; sequence ALIASSAGLILMMIISVMSIM. Topologically, residues 185–195 are cytoplasmic; that stretch reads KLLIKPKSDSS.

Belongs to the Casparian strip membrane proteins (CASP) family. In terms of assembly, homodimer and heterodimers.

The protein resides in the cell membrane. The chain is CASP-like protein 1B1 from Populus trichocarpa (Western balsam poplar).